We begin with the raw amino-acid sequence, 231 residues long: Small ribosomal subunit protein uS3 (231 aa).

In terms of domain architecture, KH type-2 spans 39 to 107 (IRKYIVENLP…DVKLNIVEIR (69 aa)).

Belongs to the universal ribosomal protein uS3 family. Part of the 30S ribosomal subunit. Forms a tight complex with proteins S10 and S14.

Functionally, binds the lower part of the 30S subunit head. Binds mRNA in the 70S ribosome, positioning it for translation. This chain is Small ribosomal subunit protein uS3, found in Novosphingobium aromaticivorans (strain ATCC 700278 / DSM 12444 / CCUG 56034 / CIP 105152 / NBRC 16084 / F199).